We begin with the raw amino-acid sequence, 372 residues long: MNDKKELKLILVAARNQLSSGDIKSLIAYLESNDCEFEISLQISEPTEQPELLELHRLVAIPALIKISPAPKQIFAGSNIFSQFQKWLPRWTQEGLTKNLGINLQPSKIDSIRTQKEFLLEDELLVLRQENETLTKRIESQERLLRMVAHELRTPLTAATLAIQSQKLGQIDISKLQEVIKRRLEEIELLSQDLLEVGTTKWEALFNPQKIDLGNISAEVILELEKFWRLRNIEIDTDIPSDLPSVFADQRRMRQVLLNLIENAIKFSEDSGSIKITMIHKTNQWVEITICDKGAGIPLSEQKRIFLDRVRLPQTSEGTSGFGIGLSVCRRIVQVHGGRIWVVSELSEGSCFHFTVPVWQGQNKEQQYLTKG.

Residues 147 to 360 (MVAHELRTPL…CFHFTVPVWQ (214 aa)) enclose the Histidine kinase domain. Position 150 is a phosphohistidine; by autocatalysis (His150).

As to quaternary structure, homooligomerizes. Interacts with KaiC. Participates in the KaiBC complex, whose core is composed of a KaiC homohexamer and 6 KaiB.

It catalyses the reaction ATP + protein L-histidine = ADP + protein N-phospho-L-histidine.. In terms of biological role, member of the two-component regulatory system SasA/RpaA involved in genome-wide circadian gene expression. One of several clock output pathways. Participates in the Kai clock protein complex, the main circadian regulator in cyanobacteria, via its interaction with KaiC. KaiC enhances the autophosphorylation activity of SasA, which then transfers its phosphate group to RpaA to activate it. In addition to its output function, recruits fold-shifted KaiB (KaiB(fs)) to KaiC to cooperatively form the KaiB(6):KaiC(6) complex (independent of SasA kinase activity). Required for robustness of the circadian rhythm of gene expression and is involved in clock output, also required for adaptation to light/dark cycles. This chain is Adaptive-response sensory kinase SasA, found in Prochlorococcus marinus (strain MIT 9215).